A 429-amino-acid polypeptide reads, in one-letter code: Enolase (429 aa).

Gln-167 is a binding site for (2R)-2-phosphoglycerate. Residue Glu-209 is the Proton donor of the active site. Residues Asp-246, Glu-289, and Asp-316 each coordinate Mg(2+). Residues Lys-341, Arg-370, Ser-371, and Lys-392 each contribute to the (2R)-2-phosphoglycerate site. The active-site Proton acceptor is Lys-341.

It belongs to the enolase family. As to quaternary structure, component of the RNA degradosome, a multiprotein complex involved in RNA processing and mRNA degradation. Mg(2+) serves as cofactor.

It localises to the cytoplasm. Its subcellular location is the secreted. The protein localises to the cell surface. The catalysed reaction is (2R)-2-phosphoglycerate = phosphoenolpyruvate + H2O. The protein operates within carbohydrate degradation; glycolysis; pyruvate from D-glyceraldehyde 3-phosphate: step 4/5. Catalyzes the reversible conversion of 2-phosphoglycerate (2-PG) into phosphoenolpyruvate (PEP). It is essential for the degradation of carbohydrates via glycolysis. The chain is Enolase from Pseudomonas putida (strain ATCC 47054 / DSM 6125 / CFBP 8728 / NCIMB 11950 / KT2440).